The primary structure comprises 479 residues: MGITSLLLGLTFVLNIALAISIIFLERKDPTSSWAWVMVLLFIPILGFFLYLIFGKPISNRKIFSWDKKSRLGVKTTVQSQLRLLEENQFEFNQPDLIEHKDLVYLHLKNDEAIYTQNNGVDIFTDGQTKFDALLEDIEKAKKHIHIQYYIMRSDGLGNRLADMLIKKVNEGVEVRVLYDDMGSRSLKNSYIKRLKRAGVMVEAFFPSRFIVNFKINYRNHRKLAIIDGYIGYLGGFNVGDEYLGINKKFGYWRDTHLRVIGDAVQSMQTRFILDWNQASRDTILYNEDYYQTVSAGNVGMQIVTSGPDSEYEQIKNGYIKMIMEANDYICIQTPYFIPDESLRDALKIAVLSGVHVKIMIPNKPDHPFVYWATLSYCGDLIQAGAEIFIYQNGFLHAKTIIVDGRIASVGTANIDVRSFRLNFEVNGFLYDSEVVNRLQNEFDADLEKSTQMTRKLYDQRSIGIRFKESISRLISPVL.

Helical transmembrane passes span 5–25 and 34–54; these read SLLL…IIFL and WAWV…YLIF. PLD phosphodiesterase domains lie at 216 to 243 and 392 to 419; these read INYR…GDEY and QNGF…DVRS. Residues H221, K223, D228, H397, K399, and D404 contribute to the active site.

It belongs to the phospholipase D family. Cardiolipin synthase subfamily.

The protein resides in the cell membrane. The enzyme catalyses 2 a 1,2-diacyl-sn-glycero-3-phospho-(1'-sn-glycerol) = a cardiolipin + glycerol. Catalyzes the reversible phosphatidyl group transfer from one phosphatidylglycerol molecule to another to form cardiolipin (CL) (diphosphatidylglycerol) and glycerol. This chain is Cardiolipin synthase (cls), found in Oceanobacillus iheyensis (strain DSM 14371 / CIP 107618 / JCM 11309 / KCTC 3954 / HTE831).